A 258-amino-acid polypeptide reads, in one-letter code: Phosphate import ATP-binding protein PstB (258 aa).

In terms of domain architecture, ABC transporter spans 5–247; sequence LDLKDVNIYY…EKIFSNPRQK (243 aa). 37–44 provides a ligand contact to ATP; that stretch reads GPSGCGKS.

Belongs to the ABC transporter superfamily. Phosphate importer (TC 3.A.1.7) family. As to quaternary structure, the complex is composed of two ATP-binding proteins (PstB), two transmembrane proteins (PstC and PstA) and a solute-binding protein (PstS).

It is found in the cell membrane. The enzyme catalyses phosphate(out) + ATP + H2O = ADP + 2 phosphate(in) + H(+). In terms of biological role, part of the ABC transporter complex PstSACB involved in phosphate import. Responsible for energy coupling to the transport system. In Mycolicibacterium smegmatis (Mycobacterium smegmatis), this protein is Phosphate import ATP-binding protein PstB.